The chain runs to 198 residues: MSYYAFEGLIPVVHPDAFVHPSAVLIGDVIVGAGVYIGPLASLRGDYGRQILEAGSNLQDGCIMHGYCDTDTIVHENGHIGHGAILHGCVVGRDALVGMNSVIMDGAVIGEESIVAAMSFVKAGFQGEARQLLVGSPARVLRQVTDQELHWKRLNTKEYQDLAIRCRTGLSETKPLTQVEENRPRLKGTTDVKPKSAQ.

The disordered stretch occupies residues valine 179–glutamine 198. Over residues glutamate 180–glutamine 198 the composition is skewed to basic and acidic residues.

Belongs to the transferase hexapeptide repeat family.

Its pathway is amine and polyamine metabolism; carnitine metabolism. Its function is as follows. Overproduction of CaiE stimulates the activity of CaiB and CaiD. The protein is Carnitine operon protein CaiE of Salmonella choleraesuis (strain SC-B67).